A 508-amino-acid chain; its full sequence is Protein disulfide-isomerase (508 aa).

The N-terminal stretch at 1-17 (MLRRALLCLAVAALVRA) is a signal peptide. A Thioredoxin 1 domain is found at 18 to 134 (DAPEEEDHVL…IVNWLKKRTG (117 aa)). Residues cysteine 53 and cysteine 56 each act as nucleophile in the active site. Cysteines 53 and 56 form a disulfide. An N6-acetyllysine modification is found at lysine 200. Lysine 222 and lysine 271 each carry N6-succinyllysine. The residue at position 331 (serine 331) is a Phosphoserine. In terms of domain architecture, Thioredoxin 2 spans 349–475 (GKIKPHLMSQ…FKKFLESGGQ (127 aa)). A Phosphoserine; by FAM20C modification is found at serine 357. Residues cysteine 397 and cysteine 400 each act as nucleophile in the active site. The cysteines at positions 397 and 400 are disulfide-linked. A Phosphoserine modification is found at serine 427. The disordered stretch occupies residues 471–508 (ESGGQDGAGDDDDLEDLEEAEEPDMEEDDDQKAVKDEL). Residues 478–500 (AGDDDDLEDLEEAEEPDMEEDDD) show a composition bias toward acidic residues. The Prevents secretion from ER signature appears at 505–508 (KDEL).

Belongs to the protein disulfide isomerase family. In terms of assembly, heterodimer; heterodimerizes with the protein microsomal triglyceride transfer MTTP. Homodimer. Monomers and homotetramers may also occur. Interacts with P4HA2, forming a heterotetramer consisting of 2 alpha subunits (P4HA2) and 2 beta (P4HB), where P4HB plays the role of a structural subunit; this tetramer catalyzes the formation of 4-hydroxyproline in collagen. Also constitutes the structural subunit of the microsomal triacylglycerol transfer protein MTTP in mammalian cells. Stabilizes both enzymes and retain them in the ER without contributing to the catalytic activity. Binds UBQLN1. Interacts with ERO1B. Binds to CD4, and upon HIV-1 binding to the cell membrane, is part of a P4HB/PDI-CD4-CXCR4-gp120 complex. Interacts with ILDR2. Interacts with ERN1/IRE1A (via N-terminus); the interaction is enhanced by phosphorylation of P4HB by FAM20C in response to endoplasmic reticulum stress and results in attenuation of ERN1 activity. In terms of processing, phosphorylation of Ser-357 by FAM20C is induced by endoplasmic reticulum stress and results in a functional switch from oxidoreductase to molecular chaperone. It also promotes interaction with ERN1.

It is found in the endoplasmic reticulum. Its subcellular location is the endoplasmic reticulum lumen. The protein localises to the melanosome. The protein resides in the cell membrane. The enzyme catalyses Catalyzes the rearrangement of -S-S- bonds in proteins.. In terms of biological role, this multifunctional protein catalyzes the formation, breakage and rearrangement of disulfide bonds. At the cell surface, seems to act as a reductase that cleaves disulfide bonds of proteins attached to the cell. May therefore cause structural modifications of exofacial proteins. Inside the cell, seems to form/rearrange disulfide bonds of nascent proteins. At high concentrations and following phosphorylation by FAM20C, functions as a chaperone that inhibits aggregation of misfolded proteins. At low concentrations, facilitates aggregation (anti-chaperone activity). May be involved with other chaperones in the structural modification of the TG precursor in hormone biogenesis. Also acts as a structural subunit of various enzymes such as prolyl 4-hydroxylase and microsomal triacylglycerol transfer protein MTTP. Receptor for LGALS9; the interaction retains P4HB at the cell surface of Th2 T helper cells, increasing disulfide reductase activity at the plasma membrane, altering the plasma membrane redox state and enhancing cell migration. The sequence is that of Protein disulfide-isomerase (P4HB) from Homo sapiens (Human).